The chain runs to 177 residues: Peptide methionine sulfoxide reductase MsrA (177 aa).

Residue Cys-11 is part of the active site.

This sequence belongs to the MsrA Met sulfoxide reductase family.

It carries out the reaction L-methionyl-[protein] + [thioredoxin]-disulfide + H2O = L-methionyl-(S)-S-oxide-[protein] + [thioredoxin]-dithiol. The catalysed reaction is [thioredoxin]-disulfide + L-methionine + H2O = L-methionine (S)-S-oxide + [thioredoxin]-dithiol. In terms of biological role, has an important function as a repair enzyme for proteins that have been inactivated by oxidation. Catalyzes the reversible oxidation-reduction of methionine sulfoxide in proteins to methionine. This chain is Peptide methionine sulfoxide reductase MsrA, found in Picrophilus torridus (strain ATCC 700027 / DSM 9790 / JCM 10055 / NBRC 100828 / KAW 2/3).